The sequence spans 75 residues: Mitotic-spindle organizing protein 1 (75 aa).

This sequence belongs to the MOZART1 family. In terms of assembly, part of the gamma-tubulin complex.

The protein localises to the cytoplasm. Its subcellular location is the cytoskeleton. It localises to the microtubule organizing center. The protein resides in the centrosome. It is found in the spindle. Required for gamma-tubulin complex recruitment to the centrosome. This is Mitotic-spindle organizing protein 1 (mzt1) from Danio rerio (Zebrafish).